The following is an 860-amino-acid chain: Leucine--tRNA ligase (860 aa).

The 'HIGH' region signature appears at 42–52; the sequence is PYPSGRLHMGH. The 'KMSKS' region motif lies at 619–623; it reads KMSKS. ATP is bound at residue lysine 622.

It belongs to the class-I aminoacyl-tRNA synthetase family.

It is found in the cytoplasm. The catalysed reaction is tRNA(Leu) + L-leucine + ATP = L-leucyl-tRNA(Leu) + AMP + diphosphate. The protein is Leucine--tRNA ligase of Pectobacterium carotovorum subsp. carotovorum (strain PC1).